The following is a 339-amino-acid chain: Ketol-acid reductoisomerase (NADP(+)) (339 aa).

In terms of domain architecture, KARI N-terminal Rossmann spans Met1–Thr182. NADP(+)-binding positions include Tyr24 to Gln27, Lys48, Ser51, Thr53, and Asp83 to Gln86. His108 is an active-site residue. NADP(+) is bound at residue Gly134. The KARI C-terminal knotted domain occupies Thr183 to Ile328. Mg(2+) contacts are provided by Asp191, Glu195, Glu227, and Glu231. Residue Ser252 participates in substrate binding.

It belongs to the ketol-acid reductoisomerase family. Mg(2+) serves as cofactor.

It catalyses the reaction (2R)-2,3-dihydroxy-3-methylbutanoate + NADP(+) = (2S)-2-acetolactate + NADPH + H(+). It carries out the reaction (2R,3R)-2,3-dihydroxy-3-methylpentanoate + NADP(+) = (S)-2-ethyl-2-hydroxy-3-oxobutanoate + NADPH + H(+). The protein operates within amino-acid biosynthesis; L-isoleucine biosynthesis; L-isoleucine from 2-oxobutanoate: step 2/4. It participates in amino-acid biosynthesis; L-valine biosynthesis; L-valine from pyruvate: step 2/4. Involved in the biosynthesis of branched-chain amino acids (BCAA). Catalyzes an alkyl-migration followed by a ketol-acid reduction of (S)-2-acetolactate (S2AL) to yield (R)-2,3-dihydroxy-isovalerate. In the isomerase reaction, S2AL is rearranged via a Mg-dependent methyl migration to produce 3-hydroxy-3-methyl-2-ketobutyrate (HMKB). In the reductase reaction, this 2-ketoacid undergoes a metal-dependent reduction by NADPH to yield (R)-2,3-dihydroxy-isovalerate. This Allorhizobium ampelinum (strain ATCC BAA-846 / DSM 112012 / S4) (Agrobacterium vitis (strain S4)) protein is Ketol-acid reductoisomerase (NADP(+)).